The primary structure comprises 460 residues: GTPase Der (460 aa).

EngA-type G domains follow at residues 9–171 and 199–370; these read KTIA…SLNQ and IQVG…ECFS. GTP is bound by residues 15–22, 62–66, 123–126, 205–212, 252–256, and 316–319; these read GQPNVGKS, DTGGM, NKID, GRVNVGKS, DTAGI, and NKWD. Residues 371–455 enclose the KH-like domain; sequence RRIPTSLLNS…PLILNAKDKK (85 aa).

Belongs to the TRAFAC class TrmE-Era-EngA-EngB-Septin-like GTPase superfamily. EngA (Der) GTPase family. As to quaternary structure, associates with the 50S ribosomal subunit.

In terms of biological role, GTPase that plays an essential role in the late steps of ribosome biogenesis. The polypeptide is GTPase Der (Helicobacter pylori (strain G27)).